The primary structure comprises 312 residues: Glycerol-3-phosphate dehydrogenase [NAD(P)+] (312 aa).

4 residues coordinate NADPH: Trp11, Arg30, Arg31, and Lys95. The sn-glycerol 3-phosphate site is built by Lys95, Gly123, and Ser125. Ala127 serves as a coordination point for NADPH. Lys177, Asp230, Ser240, Arg241, and Asn242 together coordinate sn-glycerol 3-phosphate. The active-site Proton acceptor is the Lys177. Arg241 contributes to the NADPH binding site. Residues Val265 and Glu267 each coordinate NADPH.

It belongs to the NAD-dependent glycerol-3-phosphate dehydrogenase family.

It is found in the cytoplasm. It catalyses the reaction sn-glycerol 3-phosphate + NAD(+) = dihydroxyacetone phosphate + NADH + H(+). The catalysed reaction is sn-glycerol 3-phosphate + NADP(+) = dihydroxyacetone phosphate + NADPH + H(+). It participates in membrane lipid metabolism; glycerophospholipid metabolism. Functionally, catalyzes the reduction of the glycolytic intermediate dihydroxyacetone phosphate (DHAP) to sn-glycerol 3-phosphate (G3P), the key precursor for phospholipid synthesis. This Helicobacter pylori (strain HPAG1) protein is Glycerol-3-phosphate dehydrogenase [NAD(P)+].